A 324-amino-acid chain; its full sequence is Aquaporin-4 (324 aa).

The Cytoplasmic segment spans residues 1–36 (MSDRPAARPWGKCGSLCRREEIMVAFKGVWTQAFWK). Residues Cys13 and Cys17 are each lipidated (S-palmitoyl cysteine). The chain crosses the membrane as a helical span at residues 37–57 (AVTAEFLAMLIFVLLSLGSTI). Residues 58-69 (NWGGKENPLPVD) are Extracellular-facing. The helical transmembrane segment at 70 to 89 (MVLISLCFGLSIATMVQCFG) threads the bilayer. Over 90-93 (HISG) the chain is Cytoplasmic. Positions 94–101 (GHINPAVT) form an intramembrane region, discontinuously helical. An NPA 1 motif is present at residues 97 to 99 (NPA). Residues 102-115 (VAMVCTRKISIAKS) are Cytoplasmic-facing. Ser111 bears the Phosphoserine; by PKG mark. The helical transmembrane segment at 116-136 (VFYIAAQCLGAIIGAGILYLV) threads the bilayer. Topologically, residues 137–155 (TPPSVVGGLGVTTVHGNLT) are extracellular. Asn153 carries an N-linked (GlcNAc...) asparagine glycan. The helical transmembrane segment at 156–176 (AGHGLLVELIITFQLVFTIFA) threads the bilayer. Residues 177 to 184 (SCDSKRTD) lie on the Cytoplasmic side of the membrane. Residue Ser180 is modified to Phosphoserine; by PKC. The chain crosses the membrane as a helical span at residues 185-205 (VTGSIALAIGFSVAIGHLFAI). A glycan (N-linked (GlcNAc...) asparagine) is linked at Asn206. The Extracellular portion of the chain corresponds to 206-208 (NYT). The discontinuously helical intramembrane region spans 209–222 (GASMNPARSFGPAV). Residues 213 to 215 (NPA) carry the NPA 2 motif. Over 223-231 (IMGNWENHW) the chain is Extracellular. The chain crosses the membrane as a helical span at residues 232 to 252 (IYWVGPIIGAVLAGGLYEYVF). Topologically, residues 253 to 324 (CPDVELKRRF…PSGEIAQTQH (72 aa)) are cytoplasmic. 2 positions are modified to phosphoserine: Ser276 and Ser285. Thr289 carries the phosphothreonine modification. A compositionally biased stretch (basic and acidic residues) spans 305–316 (DRGDEKKGKDPS). Residues 305–324 (DRGDEKKGKDPSGEIAQTQH) form a disordered region.

It belongs to the MIP/aquaporin (TC 1.A.8) family. In terms of assembly, homotetramer. The tetramers can form oligomeric arrays in membranes. The size of the oligomers differs between tissues and is smaller in skeletal muscle than in brain. Interaction between AQP4 oligomeric arrays in close-by cells can contribute to cell-cell adhesion. Part of a complex containing MLC1, TRPV4, HEPACAM and ATP1B1. Phosphorylation by PKC at Ser-180 reduces conductance by 50%. Phosphorylation by PKG at Ser-111 in response to glutamate increases conductance by 40%. Post-translationally, isoform 2: Palmitoylated on its N-terminal region. Isoform 1: Not palmitoylated. Not expressed in kidney, Detectable in gastric parietal and brain astroglial cells. The absence of AQP4 in kidney may be critical for the extreme urinary concentration that occurs in this species (up to 5,000 mosmol/kg H(2)O).

It localises to the cell membrane. It is found in the basolateral cell membrane. Its subcellular location is the endosome membrane. The protein resides in the sarcolemma. The protein localises to the cell projection. The enzyme catalyses H2O(in) = H2O(out). Its function is as follows. Forms a water-specific channel. Plays an important role in brain water homeostasis and in glymphatic solute transport. Required for a normal rate of water exchange across the blood brain interface. Required for normal levels of cerebrospinal fluid influx into the brain cortex and parenchyma along paravascular spaces that surround penetrating arteries, and for normal drainage of interstitial fluid along paravenous drainage pathways. Thereby, it is required for normal clearance of solutes from the brain interstitial fluid, including soluble beta-amyloid peptides derived from APP. Plays a redundant role in urinary water homeostasis and urinary concentrating ability. This is Aquaporin-4 (AQP4) from Dipodomys merriami (Merriam's kangaroo rat).